The primary structure comprises 515 residues: Tripartite motif-containing protein 5 (515 aa).

N-acetylalanine is present on A2. The RING-type zinc finger occupies 15–60 (CPICLELLTEPLSLPCGHSFCQACITANHKESMLYKEEERSCPVCR). Residue S87 is modified to Phosphoserine. Residues 92 to 133 (QKVDHCARHGEKLLLFCQEDSKVICWLCERSQEHRGHHTFLM) form a B box-type zinc finger. The Zn(2+) site is built by C97, H100, C119, and H125. Residues 137–225 (AQEYHVKLQT…LTKSETEMVQ (89 aa)) adopt a coiled-coil conformation. A required for interaction with GABARAP and for autophagy region spans residues 187-200 (FEQLREILDWEESN). One can recognise a B30.2/SPRY domain in the interval 283–515 (LKGMLDMFRE…VPMTLCSPSS (233 aa)).

The protein belongs to the TRIM/RBCC family. In terms of assembly, can form homodimers and homotrimers. In addition to lower-order dimerization, also exhibits a higher-order multimerization and both low- and high-order multimerizations are essential for its restriction activity. Interacts with BTBD1 and BTBD2. Interacts with PSMC4, PSMC5, PSMD7 and HSPA8/HSC70. Interacts (via B30.2/SPRY domain) with HSPA1A/B. Interacts with PSMC2, MAP3K7/TAK1, TAB2 and TAB3. Interacts with SQSTM1. Interacts with TRIM6 and TRIM34. Interacts with ULK1 (phosphorylated form), GABARAP, GABARAPL1, GABARAPL2, MAP1LC3A, MAP1LC3C and BECN1. In terms of processing, degraded in a proteasome-independent fashion in the absence of viral infection but in a proteasome-dependent fashion following exposure to restriction sensitive virus. Post-translationally, autoubiquitinated in a RING finger- and UBE2D2-dependent manner. Monoubiquitinated by TRIM21. Deubiquitinated by Yersinia YopJ. Ubiquitination may not lead to proteasomal degradation.

Its subcellular location is the cytoplasm. The protein localises to the nucleus. The enzyme catalyses S-ubiquitinyl-[E2 ubiquitin-conjugating enzyme]-L-cysteine + [acceptor protein]-L-lysine = [E2 ubiquitin-conjugating enzyme]-L-cysteine + N(6)-ubiquitinyl-[acceptor protein]-L-lysine.. The protein operates within protein modification; protein ubiquitination. Its function is as follows. Capsid-specific restriction factor that prevents infection from non-host-adapted retroviruses. Blocks viral replication early in the life cycle, after viral entry but before reverse transcription. In addition to acting as a capsid-specific restriction factor, also acts as a pattern recognition receptor that activates innate immune signaling in response to the retroviral capsid lattice. Binding to the viral capsid triggers its E3 ubiquitin ligase activity, and in concert with the heterodimeric ubiquitin conjugating enzyme complex UBE2V1-UBE2N (also known as UBC13-UEV1A complex) generates 'Lys-63'-linked polyubiquitin chains, which in turn are catalysts in the autophosphorylation of the MAP3K7/TAK1 complex (includes TAK1, TAB2, and TAB3). Activation of the MAP3K7/TAK1 complex by autophosphorylation results in the induction and expression of NF-kappa-B and MAPK-responsive inflammatory genes, thereby leading to an innate immune response in the infected cell. Restricts infection by human immunodeficiency virus type 1 (HIV-1), simian immunodeficiency virus (SIV-mac) and N-tropic murine leukemia viruse (N-MLV). Plays a role in regulating autophagy through activation of autophagy regulator BECN1 by causing its dissociation from its inhibitors BCL2 and TAB2. In Chlorocebus tantalus (Tantalus monkey), this protein is Tripartite motif-containing protein 5 (TRIM5).